The following is a 120-amino-acid chain: Small ribosomal subunit protein uS17m (120 aa).

A mitochondrion-targeting transit peptide spans 1-20 (MSIVRSSVHAKWVVGKVIGT).

This sequence belongs to the universal ribosomal protein uS17 family. In terms of assembly, component of the mitochondrial ribosome small subunit (28S) which comprises a 12S rRNA and about 30 distinct proteins.

It localises to the mitochondrion. This chain is Small ribosomal subunit protein uS17m (Mrps17), found in Mus musculus (Mouse).